A 514-amino-acid chain; its full sequence is Na(+)/H(+) antiporter NhaB (514 aa).

The next 12 helical transmembrane spans lie at 23-43 (LALI…PFVA), 63-83 (PLLP…TSAA), 97-117 (LLLM…LFIF), 120-140 (LLLS…AAAF), 144-164 (FLDA…FYGI), 202-222 (LMMH…VGEP), 238-258 (FFLR…FTCV), 303-323 (AIIG…VGLI), 357-377 (LTVF…APII), 391-411 (LFYL…VGTI), 447-467 (ATPN…APLI), and 475-495 (VWMA…CVEF).

It belongs to the NhaB Na(+)/H(+) (TC 2.A.34) antiporter family.

It is found in the cell inner membrane. The enzyme catalyses 2 Na(+)(in) + 3 H(+)(out) = 2 Na(+)(out) + 3 H(+)(in). Its function is as follows. Na(+)/H(+) antiporter that extrudes sodium in exchange for external protons. The protein is Na(+)/H(+) antiporter NhaB of Citrobacter koseri (strain ATCC BAA-895 / CDC 4225-83 / SGSC4696).